We begin with the raw amino-acid sequence, 412 residues long: Zinc finger protein 821 (412 aa).

The tract at residues 26–83 (RQAMMKTDFPGDLGSQRQAIQQLRDQDSSSSDSEGDEEETTQDEVSSHTSEEDGGVVK) is disordered. Residues 58 to 67 (SEGDEEETTQ) show a composition bias toward acidic residues. C2H2-type zinc fingers lie at residues 116-140 (ELCQCPLCQLDCGSREQLIAHVYQH) and 150-172 (YMCPVCGRALSSPGSLGRHLLIH). Residues 257–366 (KWALRRQNEP…EKMDMMLRAQ (110 aa)) adopt a coiled-coil conformation. The interval 278–319 (RTAKKSRRDNETPEEREVRRMRDREAKRLQRMQETDEQRARR) is disordered.

It belongs to the krueppel C2H2-type zinc-finger protein family.

The protein resides in the nucleus. In terms of biological role, may be involved in transcriptional regulation. The protein is Zinc finger protein 821 (ZNF821) of Homo sapiens (Human).